A 175-amino-acid polypeptide reads, in one-letter code: Adenine phosphoribosyltransferase (175 aa).

This sequence belongs to the purine/pyrimidine phosphoribosyltransferase family. As to quaternary structure, homodimer.

It localises to the cytoplasm. The catalysed reaction is AMP + diphosphate = 5-phospho-alpha-D-ribose 1-diphosphate + adenine. Its pathway is purine metabolism; AMP biosynthesis via salvage pathway; AMP from adenine: step 1/1. Catalyzes a salvage reaction resulting in the formation of AMP, that is energically less costly than de novo synthesis. The sequence is that of Adenine phosphoribosyltransferase from Francisella tularensis subsp. tularensis (strain WY96-3418).